The sequence spans 2000 residues: Myosin-14 (2000 aa).

N-acetylalanine is present on alanine 2. Threonine 33 bears the Phosphothreonine mark. The Myosin N-terminal SH3-like domain occupies threonine 47 to proline 97. Serine 56 carries the phosphoserine modification. A Myosin motor domain is found at serine 101–aspartate 804. Glycine 194–threonine 201 is an ATP binding site. Residues leucine 682–histidine 704 are actin-binding. Positions valine 807–alanine 836 constitute an IQ domain. Residues leucine 866–arginine 1951 adopt a coiled-coil conformation. Serine 925 carries the phosphoserine modification. Residues arginine 1173–valine 1197 form a disordered region. The residue at position 1198 (threonine 1198) is a Phosphothreonine. Phosphoserine is present on residues serine 1249 and serine 1280. Disordered stretches follow at residues glutamate 1260 to glutamate 1311, histidine 1597 to glutamate 1629, serine 1720 to glutamate 1751, alanine 1910 to valine 1942, and leucine 1967 to glutamine 2000. Basic and acidic residues predominate over residues serine 1290–glutamine 1304. Residues serine 1720–aspartate 1732 show a composition bias toward basic and acidic residues. Over residues valine 1971 to glycine 1980 the composition is skewed to acidic residues. 2 positions are modified to phosphoserine: serine 1973 and serine 1985. Over residues alanine 1981–proline 1991 the composition is skewed to low complexity. Threonine 1998 is subject to Phosphothreonine.

This sequence belongs to the TRAFAC class myosin-kinesin ATPase superfamily. Myosin family. Myosin is a hexameric protein that consists of 2 heavy chain subunits (MHC), 2 alkali light chain subunits (MLC) and 2 regulatory light chain subunits (MLC-2). In terms of tissue distribution, highest levels in lung, kidney, brain and colon, very low levels in liver and bladder and no expression in spleen or seminal vesicle (at protein level). Isoform 1 is expressed in liver, kidney and testis with low levels in skeletal muscle and heart. Isoform 1 and isoform 2 are expressed in brain and lung. Isoform 2 is the main isoform expressed in skeletal muscle and heart. Isoform 3 is limited to brain stem, cerebellum and spinal cord.

Its function is as follows. Cellular myosin that appears to play a role in cytokinesis, cell shape, and specialized functions such as secretion and capping. This is Myosin-14 (Myh14) from Mus musculus (Mouse).